The primary structure comprises 354 residues: Uroporphyrinogen decarboxylase (354 aa).

Substrate is bound by residues 27-31 (RQAGR), aspartate 77, tyrosine 154, threonine 209, and histidine 327.

The protein belongs to the uroporphyrinogen decarboxylase family. As to quaternary structure, homodimer.

Its subcellular location is the cytoplasm. It catalyses the reaction uroporphyrinogen III + 4 H(+) = coproporphyrinogen III + 4 CO2. The protein operates within porphyrin-containing compound metabolism; protoporphyrin-IX biosynthesis; coproporphyrinogen-III from 5-aminolevulinate: step 4/4. Catalyzes the decarboxylation of four acetate groups of uroporphyrinogen-III to yield coproporphyrinogen-III. The polypeptide is Uroporphyrinogen decarboxylase (Pseudomonas putida (strain GB-1)).